Reading from the N-terminus, the 441-residue chain is tRNA modification GTPase MnmE (441 aa).

3 residues coordinate (6S)-5-formyl-5,6,7,8-tetrahydrofolate: R23, E81, and R121. A TrmE-type G domain is found at 219–366 (GFTVVLAGAP…LLDAIQAAAE (148 aa)). Residues 229 to 234 (NSGKST), 248 to 254 (SDSPGTT), and 273 to 276 (DTAG) each bind GTP. Mg(2+) is bound by residues S233 and T254. Residue K441 participates in (6S)-5-formyl-5,6,7,8-tetrahydrofolate binding.

Belongs to the TRAFAC class TrmE-Era-EngA-EngB-Septin-like GTPase superfamily. TrmE GTPase family. As to quaternary structure, homodimer. Heterotetramer of two MnmE and two MnmG subunits. The cofactor is K(+).

It localises to the cytoplasm. Exhibits a very high intrinsic GTPase hydrolysis rate. Involved in the addition of a carboxymethylaminomethyl (cmnm) group at the wobble position (U34) of certain tRNAs, forming tRNA-cmnm(5)s(2)U34. The polypeptide is tRNA modification GTPase MnmE (Methylobacterium radiotolerans (strain ATCC 27329 / DSM 1819 / JCM 2831 / NBRC 15690 / NCIMB 10815 / 0-1)).